A 309-amino-acid polypeptide reads, in one-letter code: (S)-sulfolactate dehydrogenase (309 aa).

Residues Gly151–Ile152, Asp171, Thr231–Arg233, and Asp257 each bind NAD(+). Residue Arg233 is part of the active site. The active site involves Glu262. The active-site Proton donor is His281. His281–Gly284 contacts NAD(+).

It belongs to the D-isomer specific 2-hydroxyacid dehydrogenase family.

It catalyses the reaction (2S)-3-sulfolactate + NAD(+) = 3-sulfopyruvate + NADH + H(+). Functionally, dehydrogenase of the (R,S)-sulfolactate degradation pathway that only acts on the (S)-enantiomer of 3-sulfolactate. Together with ComC, provides a racemase system that converts (2S)-3-sulfolactate to (2R)-3-sulfolactate, which is degraded further by (2R)-sulfolactate sulfo-lyase. Specific for NAD. Also able to form sulfolactate from sulfopyruvate. In Chromohalobacter salexigens (strain ATCC BAA-138 / DSM 3043 / CIP 106854 / NCIMB 13768 / 1H11), this protein is (S)-sulfolactate dehydrogenase (slcC).